The chain runs to 262 residues: Co-chaperone protein DjlA (262 aa).

The Periplasmic portion of the chain corresponds to 1–6 (MRFWGK). Residues 7–30 (FFGFVIGFMFGRFFGALLGLWLGH) traverse the membrane as a helical segment. Over 31-262 (LYDKRPGGGA…DRVKSERGMR (232 aa)) the chain is Cytoplasmic. A J domain is found at 196 to 262 (DAYHLLGITA…DRVKSERGMR (67 aa)).

In terms of assembly, homodimer.

It localises to the cell inner membrane. Regulatory DnaK co-chaperone. Direct interaction between DnaK and DjlA is needed for the induction of the wcaABCDE operon, involved in the synthesis of a colanic acid polysaccharide capsule, possibly through activation of the RcsB/RcsC phosphotransfer signaling pathway. The colanic acid capsule may help the bacterium survive conditions outside the host. This Shewanella oneidensis (strain ATCC 700550 / JCM 31522 / CIP 106686 / LMG 19005 / NCIMB 14063 / MR-1) protein is Co-chaperone protein DjlA.